A 1006-amino-acid chain; its full sequence is Collagen alpha-2(I) chain (1006 aa).

The tract at residues 1 to 84 (SGGFDFSFLP…GFPGTPGLPG (84 aa)) is disordered. 4-hydroxyproline is present on residues Pro-10, Pro-13, Pro-35, and Pro-41. Positions 28 to 64 (LMGPRGPPGASGAPGPQGFQGPAGEPGEPGQTGPAGA) are enriched in low complexity. Lys-86 bears the 5-hydroxylysine; alternate mark. The O-linked (Gal...) hydroxylysine; alternate glycan is linked to Lys-86. Residues 99-1006 (GQPGAAGVKG…FGYEGDFYRA (908 aa)) are disordered. 2 stretches are compositionally biased toward low complexity: residues 142–163 (SRGS…SAGP) and 209–230 (PGAN…AGAP). Gly residues predominate over residues 264–273 (GESGGKGEPG). Residues 274–284 (SAGPQGPPGSS) show a composition bias toward low complexity. Over residues 306-315 (GLRGGPGSRG) the composition is skewed to gly residues. The span at 328–344 (PAGARGASGPAGVRGPS) shows a compositional bias: low complexity. 2 positions are modified to 4-hydroxyproline: Pro-350 and Pro-353. The segment covering 379–398 (LPGIDGRPGPIGPAGARGEA) has biased composition (low complexity). Residues 447-456 (GVQGGKGEQG) are compositionally biased toward gly residues. 2 stretches are compositionally biased toward low complexity: residues 503 to 520 (PGES…SRGP) and 532 to 542 (EPGVVGAPGTA). A compositionally biased stretch (gly residues) spans 543–552 (GPAGSGGLPG). 2 stretches are compositionally biased toward low complexity: residues 585–615 (AVGA…PRGS) and 622–642 (VGPA…QPGA). The span at 643–652 (KGERGTKGPK) shows a compositional bias: basic and acidic residues. Low complexity predominate over residues 660 to 670 (PTGPVGSAGPA). The span at 680–689 (GSRGDGGPPG) shows a compositional bias: gly residues. A compositionally biased stretch (low complexity) spans 691–700 (TGFPGAAGRT). Over residues 737–746 (GETGAGGPPG) the composition is skewed to gly residues. Composition is skewed to low complexity over residues 754–781 (SGEP…LGLP) and 789–799 (LPGVAGAVGEP). Positions 800–810 (GPLGIGPPGAR) are enriched in gly residues. Positions 837-882 (YAGNPGPVGAAGAPGPHGAVGPAGKHGNRGEPGPVGSAGPVGALGP) are enriched in low complexity. Basic and acidic residues predominate over residues 892-903 (RGDKGEAGDKGP). The span at 976 to 988 (SGPPGPPGPPGPP) shows a compositional bias: pro residues.

It belongs to the fibrillar collagen family. In terms of assembly, trimers of one alpha 2(I) and two alpha 1(I) chains. Interacts (via C-terminus) with TMEM131 (via PapD-L domain); the interaction is direct and is involved in assembly and TRAPPIII ER-to-Golgi transport complex-dependent secretion of collagen. In terms of processing, prolines at the third position of the tripeptide repeating unit (G-X-Y) are hydroxylated in some or all of the chains. As to expression, expressed in bones.

It localises to the secreted. It is found in the extracellular space. Its subcellular location is the extracellular matrix. Functionally, type I collagen is a member of group I collagen (fibrillar forming collagen). This is Collagen alpha-2(I) chain from Choloepus hoffmanni (Hoffmann's two-fingered sloth).